The following is a 71-amino-acid chain: UPF0352 protein VCM66_1964 (71 aa).

This sequence belongs to the UPF0352 family.

This chain is UPF0352 protein VCM66_1964, found in Vibrio cholerae serotype O1 (strain M66-2).